Reading from the N-terminus, the 507-residue chain is Pre-glycoprotein polyprotein GP complex (507 aa).

The N-myristoyl glycine; by host moiety is linked to residue Gly-2. Topologically, residues 2–17 (GQVVTFLQSLPEVINE) are extracellular. Residues 18–33 (AINIALIAISIICILK) form a helical membrane-spanning segment. The Cytoplasmic segment spans residues 34-58 (GLVNFWKCGVVQLAIFLCLAGRKCD). Residue Cys-57 participates in Zn(2+) binding. Over 59-445 (GLMIDRRHEL…QGKTPIALTD (387 aa)) the chain is Extracellular. Cystine bridges form between Cys-86/Cys-247, Cys-292/Cys-305, Cys-314/Cys-323, and Cys-377/Cys-398. 4 N-linked (GlcNAc...) asparagine; by host glycosylation sites follow: Asn-89, Asn-111, Asn-179, and Asn-240. 4 N-linked (GlcNAc...) asparagine; by host glycosylation sites follow: Asn-378, Asn-386, Asn-403, and Asn-408. The chain crosses the membrane as a helical span at residues 446 to 466 (ICFWSLVFFTSTVFLQLVGIP). Residues 467-507 (THRHLVGEGCPKPHRITSNSLCACGYYKIPKRPTRWVRKGK) lie on the Cytoplasmic side of the membrane. Zn(2+) is bound by residues His-468, His-470, Cys-476, His-480, Cys-488, and Cys-490.

It belongs to the arenaviridae GPC protein family. In terms of assembly, interacts with glycoprotein G2. Part of the GP complex (GP-C) together with glycoprotein G1 and glycoprotein G2. The GP-complex interacts with protein Z, which interacts with ribonucleocapsid; these interactions may induce virion budding. As to quaternary structure, homotrimer; disulfide-linked. In pre-fusion state, G1 homotrimers bind G2 homotrimers via ionic interactions. Part of the GP complex (GP-C) together with glycoprotein G2 and the stable signal peptide. The GP-complex interacts with protein Z, which interacts with ribonucleocapsid; these interactions may induce virion budding. Homotrimer. Interacts with the stable signal peptide. In pre-fusion state, G2 homotrimers bind G1 homotrimers via ionic interactions. Part of the GP complex (GP-C) together with glycoprotein G1 and the stable signal peptide. Acidification in the endosome triggers rearrangements, which ultimately leads to a 6 helix bundle formed by the two heptad repeat domains (HR1 and HR2) in post-fusion state. The GP-complex interacts with protein Z, which interacts with ribonucleocapsid; these interactions may induce virion budding. In terms of processing, specific enzymatic cleavages in vivo yield mature proteins. GP-C polyprotein is cleaved in the endoplasmic reticulum by the host protease MBTPS1. Only cleaved glycoprotein is incorporated into virions. The SSP remains stably associated with the GP complex following cleavage by signal peptidase and plays crucial roles in the trafficking of GP through the secretory pathway. Post-translationally, myristoylation is necessary for GP2-mediated fusion activity.

Its subcellular location is the virion membrane. The protein localises to the host endoplasmic reticulum membrane. It localises to the host Golgi apparatus membrane. The protein resides in the host cell membrane. Functionally, functions as a cleaved signal peptide that is retained as the third component of the GP complex (GP-C). Helps to stabilize the spike complex in its native conformation. The SSP is required for efficient glycoprotein expression, post-translational maturation cleavage of G1 and G2, glycoprotein transport to the cell surface plasma membrane, formation of infectious virus particles, and acid pH-dependent glycoprotein-mediated cell fusion. In terms of biological role, forms the virion spikes together with glycoprotein G2. The glycoprotein spike trimers are connected to the underlying matrix. Interacts with the host receptor leading to virus endocytosis. Forms the virion spikes together with glycoprotein G1. The glycoprotein spike trimers are connected to the underlying matrix. Class I viral fusion protein that directs fusion of viral and host endosomal membranes, leading to delivery of the nucleocapsid into the cytoplasm. Membrane fusion is mediated by irreversible conformational changes induced by acidification. In Allpahuayo mammarenavirus (isolate Rat/Peru/CLHP-2472/1997) (ALLV), this protein is Pre-glycoprotein polyprotein GP complex.